We begin with the raw amino-acid sequence, 1128 residues long: Adipocyte enhancer-binding protein 1 (1128 aa).

Residues 1-25 form the signal peptide; sequence MAAVRTASLLCGLLALLALCPEGSP. A disordered region spans residues 40–368; that stretch reads GFLSEFETQS…PRKGEELEEE (329 aa). Over residues 77-109 the composition is skewed to basic and acidic residues; sequence PRADAEAPPEKNKDKEKKGKKDKGPKAAKHLEG. The span at 113-163 shows a compositional bias: basic residues; that stretch reads PTKKPKEKPPKATKKPKEKPPKATKKPKEKPPKATKKPKEKPPKATKRPSA. Composition is skewed to polar residues over residues 178–187 and 198–209; these read RSLTSPSNPG and TSLNTWQGQGEE. Residues 249 to 261 are compositionally biased toward basic residues; that stretch reads RQKQPRPTPSRKR. Composition is skewed to basic and acidic residues over residues 267 to 282 and 327 to 363; these read PEEK…EVDP and EELK…RKGE. In terms of domain architecture, F5/8 type C spans 375-532; it reads IKCPPIGMES…LCMRLEVLGC (158 aa). The tract at residues 382-547 is required for DNA-binding and interaction with NFKBIA; sequence MESHRIEDNQ…YSYYAQNEVV (166 aa). Interaction with MAPK1 and MAPK3 stretches follow at residues 413–616 and 998–1128; these read AGAN…TAGM and DPSR…FGDF. Asn-520 carries an N-linked (GlcNAc...) asparagine glycan. An interaction with PTEN region spans residues 547 to 977; sequence VTTDSLDFRH…TQCNFILARS (431 aa). Residues 555-896 form the Peptidase M14 domain; it reads RHHSYKDMRQ…EALLTFMEQV (342 aa). Positions 933–1128 are required for transcriptional repression; it reads DYWRILNPGE…ETYTVNFGDF (196 aa). The interval 1027–1056 is disordered; sequence LRRLNSTTGPATSPTPALTLPPSPTPGSTS. Low complexity predominate over residues 1030–1044; the sequence is LNSTTGPATSPTPAL.

The protein belongs to the peptidase M14 family. In terms of assembly, interacts with different types of collagen, including collagens I, III, and V. Interacts with GNG5, NFKBIA, MAPK1, MAPK3 and PTEN. May interact with calmodulin. Interaction with MAPK1 may stimulate DNA-binding. Binds to DNA in vitro. Phosphorylated by MAPK1 in vitro. Expressed in aorta.

It is found in the secreted. Functionally, as a positive regulator of collagen fibrillogenesis, it is probably involved in the organization and remodeling of the extracellular matrix. May positively regulate MAP-kinase activity in adipocytes, leading to enhanced adipocyte proliferation and reduced adipocyte differentiation. May also positively regulate NF-kappa-B activity in macrophages by promoting the phosphorylation and subsequent degradation of I-kappa-B-alpha (NFKBIA), leading to enhanced macrophage inflammatory responsiveness. Can act as a transcriptional repressor. This Rattus norvegicus (Rat) protein is Adipocyte enhancer-binding protein 1 (Aebp1).